We begin with the raw amino-acid sequence, 366 residues long: Phenylalanine--tRNA ligase alpha subunit (366 aa).

E264 provides a ligand contact to Mg(2+).

This sequence belongs to the class-II aminoacyl-tRNA synthetase family. Phe-tRNA synthetase alpha subunit type 1 subfamily. As to quaternary structure, tetramer of two alpha and two beta subunits. Mg(2+) serves as cofactor.

The protein resides in the cytoplasm. The catalysed reaction is tRNA(Phe) + L-phenylalanine + ATP = L-phenylalanyl-tRNA(Phe) + AMP + diphosphate + H(+). This is Phenylalanine--tRNA ligase alpha subunit from Zymomonas mobilis subsp. mobilis (strain ATCC 31821 / ZM4 / CP4).